The sequence spans 590 residues: Acetylcholinesterase (590 aa).

Residues 1 to 24 (MREMNLLVTSSLGVLLHLVVLCQA) form the signal peptide. N-linked (GlcNAc...) asparagine glycosylation is present at N83. An intrachain disulfide couples C91 to C118. Catalysis depends on S224, which acts as the Acyl-ester intermediate. Cysteines 278 and 289 form a disulfide. Catalysis depends on E351, which acts as the Charge relay system. C426 and C545 form a disulfide bridge. N440 carries an N-linked (GlcNAc...) asparagine glycan. The active-site Charge relay system is H464. N-linked (GlcNAc...) asparagine glycosylation is found at N481 and N557. The GPI-anchor amidated serine moiety is linked to residue S567. Positions 568 to 590 (SGTSSSKGIIFYVLFSILYLIFY) are cleaved as a propeptide — removed in mature form.

The protein belongs to the type-B carboxylesterase/lipase family. As to quaternary structure, isoform H form is a homodimer; the asymmetric form is a disulfide-bonded oligomer composed of a collagenic subunit (Q) and a variable number of T catalytic subunits. An interchain disulfide bond is present in what becomes position 596 of the T isoform. As to expression, found in the synapses and to a lower extent in extrajunctional areas of muscle and nerve, and on erythrocyte membranes.

The protein resides in the cell membrane. It is found in the synapse. It catalyses the reaction acetylcholine + H2O = choline + acetate + H(+). Functionally, terminates signal transduction at the neuromuscular junction by rapid hydrolysis of the acetylcholine released into the synaptic cleft. May be involved in cell-cell interactions. In Torpedo marmorata (Marbled electric ray), this protein is Acetylcholinesterase (ache).